The following is a 619-amino-acid chain: MSPLASNPPVPAATDPSVIRNFCIIAHIDHGKSTLADRMLQATGVVQPRDMKAQYLDRMDIERERGITIKSQAVRMPWSVDGVDYALNMIDTPGHVDFTYEVSRSLAACEGAILLVDAAQGIEAQTLANLYLAMEHELEIIPVLNKIDLPAADPDRYAAELASLIGCEPEDVLRVSGKTGVGVEELLDRVVRAIPGPEGDADAPARAMIFDSVYDTYRGVVTYVRVVDGRLSPREKVRMMSTGTTYELLEIGVSSPEPVPTKGLAAGEVGYLITGVKDVRQSKVGDTVTNHAHPAEQSLGGYEDPKPMVFSGLYPIDGSDYPVLRDALDKLKLNDAALVYEPETSVALGFGFRVGFLGLLHLEIVRERLEREFDLDLISTAPNVVYEVTREDREVVTVTNPSEFPEGKILEVREPMASATIIVPAEFIGAVMELCQAKRGNLKGMDYLSEERVEIRYWIPLAEIVFDFFDQLKSRTKGYASLDWKADGDQVADLVKVDILLQGEQVDAFSSITHRDNAYAYGVMMTGKLKELIPRQQYEVPIQAAIGSRIIARENIRAIRKDVLSKCYGGDISRKRKLLEKQKEGKKRMKMVGRVEVPQEAFIAALSSDGAGADQAAKK.

A tr-type G domain is found at 17 to 198 (SVIRNFCIIA…RVVRAIPGPE (182 aa)). Residues 29-34 (DHGKST) and 145-148 (NKID) each bind GTP.

Belongs to the TRAFAC class translation factor GTPase superfamily. Classic translation factor GTPase family. LepA subfamily.

The protein localises to the cell membrane. The enzyme catalyses GTP + H2O = GDP + phosphate + H(+). In terms of biological role, required for accurate and efficient protein synthesis under certain stress conditions. May act as a fidelity factor of the translation reaction, by catalyzing a one-codon backward translocation of tRNAs on improperly translocated ribosomes. Back-translocation proceeds from a post-translocation (POST) complex to a pre-translocation (PRE) complex, thus giving elongation factor G a second chance to translocate the tRNAs correctly. Binds to ribosomes in a GTP-dependent manner. The protein is Elongation factor 4 of Micrococcus luteus (strain ATCC 4698 / DSM 20030 / JCM 1464 / CCM 169 / CCUG 5858 / IAM 1056 / NBRC 3333 / NCIMB 9278 / NCTC 2665 / VKM Ac-2230) (Micrococcus lysodeikticus).